Here is a 395-residue protein sequence, read N- to C-terminus: Fe(3+) ions import ATP-binding protein FbpC 2 (395 aa).

The tract at residues 1–21 (MHIAQELADETCNSPRGAGHA) is disordered. An ABC transporter domain is found at 23 to 264 (LRYPSDRRTA…PKTLFVADFI (242 aa)). An ATP-binding site is contributed by 66 to 73 (GPSGCGKT).

This sequence belongs to the ABC transporter superfamily. Fe(3+) ion importer (TC 3.A.1.10) family. The complex is composed of two ATP-binding proteins (FbpC), two transmembrane proteins (FbpB) and a solute-binding protein (FbpA).

It localises to the cell inner membrane. The enzyme catalyses Fe(3+)(out) + ATP + H2O = Fe(3+)(in) + ADP + phosphate + H(+). Functionally, part of the ABC transporter complex FbpABC involved in Fe(3+) ions import. Responsible for energy coupling to the transport system. This Rhizobium meliloti (strain 1021) (Ensifer meliloti) protein is Fe(3+) ions import ATP-binding protein FbpC 2.